Consider the following 330-residue polypeptide: Autoinducer 2 import system permease protein LsrD (330 aa).

The Cytoplasmic segment spans residues 1–4 (MRIR). A helical membrane pass occupies residues 5–25 (YGWELALAALLVIEIVSFGAI). Topologically, residues 26-42 (NPRMLDLNMLLFSTSDF) are periplasmic. A helical membrane pass occupies residues 43-63 (ICIGIVALPLTMVIVSGGIDI). At 64 to 67 (SFGS) the chain is on the cytoplasmic side. A run of 2 helical transmembrane segments spans residues 68–88 (TIGL…PMPL) and 89–109 (AILL…GLII). The Cytoplasmic segment spans residues 110 to 115 (YTKVNP). Residues 116 to 136 (LVITLGTLYLFAGSALLLSGM) form a helical membrane-spanning segment. The Periplasmic segment spans residues 137 to 159 (AGATGYEGIGGFPMAFTDFANLD). The chain crosses the membrane as a helical span at residues 160 to 180 (VLGLPVPLIIFLICLLVFWLW). Over 181-209 (LHKTHAGRNVFLIGQSPRVALYSAIPVNR) the chain is Cytoplasmic. A helical transmembrane segment spans residues 210-230 (TLCALYAMTGLASAVAAVLLV). The Periplasmic portion of the chain corresponds to 231–237 (SYFGSAR). A run of 2 helical transmembrane segments spans residues 238–258 (SDLG…GGAN) and 259–279 (IYGG…VGYL). Residues 280–285 (QQGLQM) are Periplasmic-facing. The helical transmembrane segment at 286–306 (AGVPNQVSSALSGALLIVVVV) threads the bilayer. Topologically, residues 307 to 330 (GRSVSLHRQQIKEWLARRANNPLP) are cytoplasmic.

Belongs to the binding-protein-dependent transport system permease family. AraH/RbsC subfamily. In terms of assembly, the complex is composed of two ATP-binding proteins (LsrA), two transmembrane proteins (LsrC and LsrD) and a solute-binding protein (LsrB).

The protein localises to the cell inner membrane. Its function is as follows. Part of the ABC transporter complex LsrABCD involved in autoinducer 2 (AI-2) import. Probably responsible for the translocation of the substrate across the membrane. The chain is Autoinducer 2 import system permease protein LsrD (lsrD) from Escherichia coli O157:H7.